The sequence spans 214 residues: Thymidylate kinase (214 aa).

7–14 contributes to the ATP binding site; that stretch reads GVDGAGKR. DTMP-binding residues include aspartate 9, tyrosine 39, phenylalanine 70, arginine 74, arginine 95, asparagine 100, and tyrosine 103. Residue aspartate 9 participates in Mg(2+) binding. Residues 147-159 are LID; the sequence is GERSRGRAQRDPG. DTMP is bound by residues aspartate 163 and tyrosine 165. Residue glutamate 166 coordinates Mg(2+).

Belongs to the thymidylate kinase family. As to quaternary structure, homodimer. The cofactor is Mg(2+).

The enzyme catalyses dTMP + ATP = dTDP + ADP. Its pathway is pyrimidine metabolism; dTTP biosynthesis. Functionally, catalyzes the reversible phosphorylation of deoxythymidine monophosphate (dTMP) to deoxythymidine diphosphate (dTDP), using ATP as its preferred phosphoryl donor. Situated at the junction of both de novo and salvage pathways of deoxythymidine triphosphate (dTTP) synthesis, is essential for DNA synthesis and cellular growth. This chain is Thymidylate kinase (tmk), found in Mycobacterium tuberculosis (strain CDC 1551 / Oshkosh).